The following is a 23-amino-acid chain: Acidic phospholipase A2 CHA-E6b (23 aa).

The protein belongs to the phospholipase A2 family. Group II subfamily. D49 sub-subfamily. Requires Ca(2+) as cofactor. In terms of processing, contains 7 disulfide bonds. Expressed by the venom gland.

The protein resides in the secreted. It catalyses the reaction a 1,2-diacyl-sn-glycero-3-phosphocholine + H2O = a 1-acyl-sn-glycero-3-phosphocholine + a fatty acid + H(+). Functionally, snake venom phospholipase A2 (PLA2) that shows high lipolytic (1200 umol/mg/min) and weak ADP-induced platelet aggregation activities. Also shows weak anticoagulant activity (IC(50) of about 1.0 uM). PLA2 catalyzes the calcium-dependent hydrolysis of the 2-acyl groups in 3-sn-phosphoglycerides. The sequence is that of Acidic phospholipase A2 CHA-E6b from Crotalus horridus (Timber rattlesnake).